The sequence spans 85 residues: uncharacterized protein (85 aa).

An N-terminal signal peptide occupies residues 1-35 (MIEDPSKKISLWQKWINVDPKKRILFSLGLFALSA).

It is found in the secreted. This is an uncharacterized protein from Dictyostelium discoideum (Social amoeba).